Here is a 209-residue protein sequence, read N- to C-terminus: MSKVTQIAHPLILHKLTLIRDKNTGAKDFRELVEEVAMLMAYEVTRDFNLKEVEIETPICKTKSKVLAGKKVAIVPILRAGLGMVDGILKLIPAAKVGHIGLYRDEKTLTPVEYFCKLPQDIGEREIIVTDPMLATGGSAADAIALLKKRGAKYIRLVCLVAAPEGIKVVMDAHPDVDIYVASIDEKLDESGYIVPGLGDAGDRLFGTK.

5-phospho-alpha-D-ribose 1-diphosphate contacts are provided by residues arginine 79, arginine 104, and 131 to 139; that span reads DPMLATGGS. Uracil is bound by residues isoleucine 194 and 199–201; that span reads GDA. Aspartate 200 provides a ligand contact to 5-phospho-alpha-D-ribose 1-diphosphate.

Belongs to the UPRTase family. Requires Mg(2+) as cofactor.

It catalyses the reaction UMP + diphosphate = 5-phospho-alpha-D-ribose 1-diphosphate + uracil. Its pathway is pyrimidine metabolism; UMP biosynthesis via salvage pathway; UMP from uracil: step 1/1. With respect to regulation, allosterically activated by GTP. In terms of biological role, catalyzes the conversion of uracil and 5-phospho-alpha-D-ribose 1-diphosphate (PRPP) to UMP and diphosphate. This is Uracil phosphoribosyltransferase from Clostridium tetani (strain Massachusetts / E88).